The chain runs to 121 residues: NAD(P)H-quinone oxidoreductase subunit M (121 aa).

Belongs to the complex I NdhM subunit family. As to quaternary structure, NDH-1 can be composed of about 15 different subunits; different subcomplexes with different compositions have been identified which probably have different functions.

The protein localises to the cellular thylakoid membrane. It catalyses the reaction a plastoquinone + NADH + (n+1) H(+)(in) = a plastoquinol + NAD(+) + n H(+)(out). The catalysed reaction is a plastoquinone + NADPH + (n+1) H(+)(in) = a plastoquinol + NADP(+) + n H(+)(out). Its function is as follows. NDH-1 shuttles electrons from an unknown electron donor, via FMN and iron-sulfur (Fe-S) centers, to quinones in the respiratory and/or the photosynthetic chain. The immediate electron acceptor for the enzyme in this species is believed to be plastoquinone. Couples the redox reaction to proton translocation, and thus conserves the redox energy in a proton gradient. Cyanobacterial NDH-1 also plays a role in inorganic carbon-concentration. This Synechococcus sp. (strain JA-2-3B'a(2-13)) (Cyanobacteria bacterium Yellowstone B-Prime) protein is NAD(P)H-quinone oxidoreductase subunit M.